A 353-amino-acid chain; its full sequence is Photosystem II D2 protein (353 aa).

Threonine 2 carries the N-acetylthreonine modification. Threonine 2 carries the phosphothreonine modification. Residues cysteine 41–threonine 61 traverse the membrane as a helical segment. A chlorophyll a-binding site is contributed by histidine 118. The chain crosses the membrane as a helical span at residues glycine 125–proline 141. Pheophytin a contacts are provided by glutamine 130 and asparagine 143. A helical membrane pass occupies residues valine 153–serine 166. Histidine 198 provides a ligand contact to chlorophyll a. The chain crosses the membrane as a helical span at residues alanine 208–aspartate 228. A plastoquinone contacts are provided by histidine 215 and phenylalanine 262. Position 215 (histidine 215) interacts with Fe cation. Histidine 269 lines the Fe cation pocket. Residues glycine 279–arginine 295 traverse the membrane as a helical segment.

It belongs to the reaction center PufL/M/PsbA/D family. In terms of assembly, PSII is composed of 1 copy each of membrane proteins PsbA, PsbB, PsbC, PsbD, PsbE, PsbF, PsbH, PsbI, PsbJ, PsbK, PsbL, PsbM, PsbT, PsbX, PsbY, PsbZ, Psb30/Ycf12, at least 3 peripheral proteins of the oxygen-evolving complex and a large number of cofactors. It forms dimeric complexes. The D1/D2 heterodimer binds P680, chlorophylls that are the primary electron donor of PSII, and subsequent electron acceptors. It shares a non-heme iron and each subunit binds pheophytin, quinone, additional chlorophylls, carotenoids and lipids. There is also a Cl(-1) ion associated with D1 and D2, which is required for oxygen evolution. The PSII complex binds additional chlorophylls, carotenoids and specific lipids. is required as a cofactor.

The protein localises to the plastid. The protein resides in the chloroplast thylakoid membrane. The enzyme catalyses 2 a plastoquinone + 4 hnu + 2 H2O = 2 a plastoquinol + O2. Functionally, photosystem II (PSII) is a light-driven water:plastoquinone oxidoreductase that uses light energy to abstract electrons from H(2)O, generating O(2) and a proton gradient subsequently used for ATP formation. It consists of a core antenna complex that captures photons, and an electron transfer chain that converts photonic excitation into a charge separation. The D1/D2 (PsbA/PsbD) reaction center heterodimer binds P680, the primary electron donor of PSII as well as several subsequent electron acceptors. D2 is needed for assembly of a stable PSII complex. This Chloranthus spicatus (Chulantree) protein is Photosystem II D2 protein.